We begin with the raw amino-acid sequence, 208 residues long: Cell death-inducing p53-target protein 1 (208 aa).

2 stretches are compositionally biased toward pro residues: residues 1 to 13 (MSSE…PGGP) and 36 to 67 (MQPP…PGFI). The disordered stretch occupies residues 1-71 (MSSEPPPPYP…PQPGFIPPHM (71 aa)). The 85-residue stretch at 122 to 206 (ATTVTVLQGE…CKAYIYTYKR (85 aa)) folds into the LITAF domain. Zn(2+) is bound by residues cysteine 142 and cysteine 145. The tract at residues 164-184 (LGFFCCFMGCDLGCCLIPCLI) is membrane-binding amphipathic helix. Residues cysteine 194 and cysteine 197 each coordinate Zn(2+).

It belongs to the CDIP1/LITAF family. In terms of tissue distribution, highly expressed in brain. Expressed at lower level in heart, skeletal muscle, kidney, pancreas and liver. Weakly or not expressed in placenta and lung.

The protein localises to the late endosome membrane. It is found in the lysosome membrane. Its function is as follows. Acts as an important p53/TP53-apoptotic effector. Regulates TNF-alpha-mediated apoptosis in a p53/TP53-dependent manner. The sequence is that of Cell death-inducing p53-target protein 1 (CDIP1) from Homo sapiens (Human).